We begin with the raw amino-acid sequence, 197 residues long: ATP-dependent Clp protease proteolytic subunit (197 aa).

Ser102 functions as the Nucleophile in the catalytic mechanism. The active site involves His127.

Belongs to the peptidase S14 family. Fourteen ClpP subunits assemble into 2 heptameric rings which stack back to back to give a disk-like structure with a central cavity, resembling the structure of eukaryotic proteasomes.

It is found in the cytoplasm. It catalyses the reaction Hydrolysis of proteins to small peptides in the presence of ATP and magnesium. alpha-casein is the usual test substrate. In the absence of ATP, only oligopeptides shorter than five residues are hydrolyzed (such as succinyl-Leu-Tyr-|-NHMec, and Leu-Tyr-Leu-|-Tyr-Trp, in which cleavage of the -Tyr-|-Leu- and -Tyr-|-Trp bonds also occurs).. Functionally, cleaves peptides in various proteins in a process that requires ATP hydrolysis. Has a chymotrypsin-like activity. Plays a major role in the degradation of misfolded proteins. The sequence is that of ATP-dependent Clp protease proteolytic subunit from Buchnera aphidicola subsp. Schizaphis graminum (strain Sg).